A 363-amino-acid polypeptide reads, in one-letter code: Dihydroorotate dehydrogenase (quinone) (363 aa).

FMN is bound by residues 77–81 and T101; that span reads AGMDK. Residue K81 coordinates substrate. 126 to 130 is a binding site for substrate; the sequence is NRMGF. FMN-binding residues include S155 and N188. N188 provides a ligand contact to substrate. The active-site Nucleophile is S191. N193 provides a ligand contact to substrate. FMN is bound by residues K234 and T262. Substrate is bound at residue 263–264; it reads NT. FMN-binding positions include G287, G316, and 337–338; that span reads YT.

It belongs to the dihydroorotate dehydrogenase family. Type 2 subfamily. As to quaternary structure, monomer. FMN is required as a cofactor.

It is found in the cell membrane. The enzyme catalyses (S)-dihydroorotate + a quinone = orotate + a quinol. Its pathway is pyrimidine metabolism; UMP biosynthesis via de novo pathway; orotate from (S)-dihydroorotate (quinone route): step 1/1. Catalyzes the conversion of dihydroorotate to orotate with quinone as electron acceptor. This Chloroflexus aurantiacus (strain ATCC 29366 / DSM 635 / J-10-fl) protein is Dihydroorotate dehydrogenase (quinone).